Reading from the N-terminus, the 171-residue chain is Lipoprotein signal peptidase (171 aa).

Transmembrane regions (helical) follow at residues 8–28, 64–84, and 99–119; these read SFLWLSAVAFVVDLLTKYIVV, WQQYFFILLALAISGMLVYFL, and ALIIGGALANMVDRAYNGFVV. Catalysis depends on residues D120 and D138. A helical transmembrane segment spans residues 133-153; the sequence is VFNIADIAICIGAGLLALDAF.

Belongs to the peptidase A8 family.

It localises to the cell inner membrane. It catalyses the reaction Release of signal peptides from bacterial membrane prolipoproteins. Hydrolyzes -Xaa-Yaa-Zaa-|-(S,diacylglyceryl)Cys-, in which Xaa is hydrophobic (preferably Leu), and Yaa (Ala or Ser) and Zaa (Gly or Ala) have small, neutral side chains.. It participates in protein modification; lipoprotein biosynthesis (signal peptide cleavage). Functionally, this protein specifically catalyzes the removal of signal peptides from prolipoproteins. The polypeptide is Lipoprotein signal peptidase (Haemophilus influenzae (strain PittGG)).